The primary structure comprises 558 residues: Ankyrin repeat protein OPG189 (558 aa).

ANK repeat units lie at residues 65-95 (YGENILHIYSMDDANTNIIIFFLDRVLNINK), 169-205 (YGCTLLHRCIYHYKKSESESYNELIKILLNNGSDVDK), 209-239 (YGNTPFILLCKHDINNVELFEICLENANIDS), 243-272 (NRYTPLHYVSCRNKYDFVKLLISKGANVNA), 276-304 (FGTTPFYCGIIHGISLIKLYLESDTELEI), 339-368 (YNETSIYDAVSYNAYNTLVYLLNRNGDFET), and 372-401 (SGCTCISEAVANNNKIIMEVLLSKRPSLKI).

The protein belongs to the orthopoxvirus OPG189 protein family.

Functionally, contributes to viral release without involving rearrangement of host actin. This chain is Ankyrin repeat protein OPG189 (OPG189), found in Vaccinia virus (strain Western Reserve) (VACV).